The sequence spans 60 residues: Metallothionein (60 aa).

A beta region spans residues 1-28; that stretch reads MDCACATGGSCSCAGSCKCENCKCTSCK. Residues C3, C5, C11, C13, C17, C19, C22, C24, C27, C31, C32, C34, C35, C39, C42, C46, C48, C56, C58, and C59 each contribute to the a divalent metal cation site. The alpha stretch occupies residues 29 to 60; it reads KSCCSCCPSECEKCGQGCVCKGGSSEKCSCCN.

It belongs to the metallothionein superfamily. Type 1 family.

Functionally, metallothioneins have a high content of cysteine residues that bind various heavy metals. The polypeptide is Metallothionein (MT-A) (Ambystoma mexicanum (Axolotl)).